The primary structure comprises 543 residues: T-complex protein 1 subunit gamma (543 aa).

The protein belongs to the TCP-1 chaperonin family.

It is found in the cytoplasm. Functionally, molecular chaperone; assists the folding of proteins upon ATP hydrolysis. Known to play a role, in vitro, in the folding of actin and tubulin. Plays a role in microtubule polymerization. The sequence is that of T-complex protein 1 subunit gamma from Caenorhabditis elegans.